A 154-amino-acid polypeptide reads, in one-letter code: Xanthine-guanine phosphoribosyltransferase (154 aa).

5-phospho-alpha-D-ribose 1-diphosphate contacts are provided by residues 37–38 (RG), Arg69, and 88–96 (DDLVDSGDT). Residue Arg69 participates in GMP binding. Residue Asp89 coordinates Mg(2+). Residues Asp92 and Ile135 each contribute to the guanine site. Residues Asp92 and Ile135 each coordinate xanthine. GMP is bound by residues 92–96 (DSGDT) and 134–135 (WI).

It belongs to the purine/pyrimidine phosphoribosyltransferase family. XGPT subfamily. Homotetramer. Requires Mg(2+) as cofactor.

Its subcellular location is the cell inner membrane. It carries out the reaction GMP + diphosphate = guanine + 5-phospho-alpha-D-ribose 1-diphosphate. The catalysed reaction is XMP + diphosphate = xanthine + 5-phospho-alpha-D-ribose 1-diphosphate. The enzyme catalyses IMP + diphosphate = hypoxanthine + 5-phospho-alpha-D-ribose 1-diphosphate. It participates in purine metabolism; GMP biosynthesis via salvage pathway; GMP from guanine: step 1/1. The protein operates within purine metabolism; XMP biosynthesis via salvage pathway; XMP from xanthine: step 1/1. Its function is as follows. Purine salvage pathway enzyme that catalyzes the transfer of the ribosyl-5-phosphate group from 5-phospho-alpha-D-ribose 1-diphosphate (PRPP) to the N9 position of the 6-oxopurines guanine and xanthine to form the corresponding ribonucleotides GMP (guanosine 5'-monophosphate) and XMP (xanthosine 5'-monophosphate), with the release of PPi. To a lesser extent, also acts on hypoxanthine. This Vibrio cholerae serotype O1 (strain ATCC 39541 / Classical Ogawa 395 / O395) protein is Xanthine-guanine phosphoribosyltransferase.